Consider the following 210-residue polypeptide: RNA binding protein, mRNA processing factor 2 (210 aa).

Residues 1–10 (MSNLKPDVEH) show a composition bias toward basic and acidic residues. The segment at 1–25 (MSNLKPDVEHCTGAGTGTGTGPSGP) is disordered. An N-acetylserine modification is found at Ser-2. An RRM domain is found at 31–108 (RTLFVSGLPV…QTLRLEFAKA (78 aa)). An important for homodimerization region spans residues 41 to 51 (DIKPRELYLLF).

As to quaternary structure, homodimer. Interacts with EEF2.

The protein resides in the cytoplasm. The protein localises to the nucleus. It localises to the stress granule. In terms of biological role, RNA-binding protein involved in the regulation of smooth muscle cell differentiation and proliferation in the gastrointestinal system. Binds NOG mRNA, the major inhibitor of the bone morphogenetic protein (BMP) pathway. Mediates an increase of NOG mRNA levels, thereby contributing to the negative regulation of BMP signaling pathway and promoting reversible dedifferentiation and proliferation of smooth muscle cells. Acts as a pre-mRNA alternative splicing regulator. Mediates ACTN1 and FLNB alternative splicing. Likely binds to mRNA tandem CAC trinucleotide or CA dinucleotide motifs. The polypeptide is RNA binding protein, mRNA processing factor 2 (Rbpms2) (Rattus norvegicus (Rat)).